A 303-amino-acid polypeptide reads, in one-letter code: Recombination-associated protein RdgC (303 aa).

The protein belongs to the RdgC family.

It is found in the cytoplasm. The protein localises to the nucleoid. Its function is as follows. May be involved in recombination. In Serratia proteamaculans (strain 568), this protein is Recombination-associated protein RdgC.